The sequence spans 58 residues: Large ribosomal subunit protein bL32 (58 aa).

The span at 1–19 shows a compositional bias: basic residues; that stretch reads MAVPKKRTSKSKKNMRKAN. The tract at residues 1-58 is disordered; sequence MAVPKKRTSKSKKNMRKANWKNQAKLAAKKALSLGKSVETQRSHSFVHPRYEEEEEED. Low complexity predominate over residues 20 to 32; the sequence is WKNQAKLAAKKAL.

This sequence belongs to the bacterial ribosomal protein bL32 family.

The sequence is that of Large ribosomal subunit protein bL32 from Trichodesmium erythraeum (strain IMS101).